A 108-amino-acid polypeptide reads, in one-letter code: uncharacterized protein (108 aa).

2 stretches are compositionally biased toward basic and acidic residues: residues 1-15 and 53-69; these read MSEAKDNGSRDEVLV and KLKDRESHQENEDRNSE. A disordered region spans residues 1-77; that stretch reads MSEAKDNGSR…SELDQDEEDK (77 aa).

This is an uncharacterized protein from Homo sapiens (Human).